The chain runs to 424 residues: MAYFIDRRLNGKNKSTVNRQRFLRRYKSQIKQSISEAINKRSVTDIESGESVSIPNADINEPMFHQGRGGRRHRVHPGNDHFVQNDKIERPQGGGGGGSGQGDASKDGEGEDEFVFQISKDEYLDLLFEDLALPNLKKTQHRQMNEYKTHRAGYTANGVPANISVVRSLQNSLARRMAMTAGKRRTLHELEESLEQLAHTEPAQLLEEERLRQEITELRQKIARVPFIDTFDLRYKNYERRAEPSSQAVMFCLMDVSGSMDQATKDMAKRFYILLYLFLSRNYKNVDVVYIRHHTQAKEVDEQEFFYSQETGGTIVSSALKLMEEVVRERYDPSQWNIYAAQASDGDNWADDSPLCHQILANQLLPMVRYYSYIEITRRSHQTLWREYETLRDTFDNFAMQHIRDQDDIYPVFRELFRKQTVGH.

The tract at residues 46 to 109 (IESGESVSIP…GQGDASKDGE (64 aa)) is disordered. The span at 77–90 (PGNDHFVQNDKIER) shows a compositional bias: basic and acidic residues. Gly residues predominate over residues 92–101 (QGGGGGGSGQ).

This sequence belongs to the UPF0229 family.

This chain is UPF0229 protein PC1_1960, found in Pectobacterium carotovorum subsp. carotovorum (strain PC1).